A 266-amino-acid chain; its full sequence is UPF0328 protein ECU03_0130 (266 aa).

The protein belongs to the UPF0328 family.

This chain is UPF0328 protein ECU03_0130, found in Encephalitozoon cuniculi (strain GB-M1) (Microsporidian parasite).